A 342-amino-acid chain; its full sequence is Signaling lymphocytic activation molecule (342 aa).

The signal sequence occupies residues 1 to 26 (MDSRGFLSLRCLLVLALASKLSCGTG). The Extracellular portion of the chain corresponds to 27-237 (ESLMNCPEVP…CRPESSVPRQ (211 aa)). The 110-residue stretch at 29–138 (LMNCPEVPGK…QHFCLQLKLY (110 aa)) folds into the Ig-like V-type domain. Asn-57, Asn-102, Asn-125, Asn-150, Asn-157, Asn-189, and Asn-217 each carry an N-linked (GlcNAc...) asparagine glycan. Residues 144-223 (PEIKVLNWTQ…PVSNRSWSFN (80 aa)) form the Ig-like C2-type domain. 2 disulfide bridges follow: Cys-158–Cys-228 and Cys-164–Cys-209. The helical transmembrane segment at 238–261 (WRLYAGLFLGGIVGVILIFEVVLL) threads the bilayer. Residues 262–342 (LLRRRGKTNH…VYASVTFPES (81 aa)) lie on the Cytoplasmic side of the membrane. An ITSM 1 motif is present at residues 282–287 (TIYAQV). Tyr-284, Tyr-310, and Tyr-334 each carry phosphotyrosine; by FYN. An SH2-binding motif is present at residues 310–315 (YVAATE). Residues 332–337 (TVYASV) carry the ITSM 2 motif.

As to quaternary structure, interacts (via cytoplasmic domain) with SH2D1A and SH2D1B; SH2D1A mediates association with FYN. Interacts (via cytoplasmic domain phosphorylated on tyrosine residues) with INPP5D and PTPN11; presence of SH2D1A facilitates binding to INPP5D. Interacts with MAP4K1. Interacts with PIK3C3, BECN1 and UVRAG; indicative for an association with PI3K complex II (PI3KC3-C2). Interacts with canine distemper virus HN protein; suggesting that it may serve as a receptor. Phosphorylated on tyrosine residues by FYN.

The protein localises to the cell membrane. Self-ligand receptor of the signaling lymphocytic activation molecule (SLAM) family. SLAM receptors triggered by homo- or heterotypic cell-cell interactions are modulating the activation and differentiation of a wide variety of immune cells and thus are involved in the regulation and interconnection of both innate and adaptive immune response. Activities are controlled by presence or absence of small cytoplasmic adapter proteins, SH2D1A/SAP and/or SH2D1B/EAT-2. SLAMF1-induced signal-transduction events in T-lymphocytes are different from those in B-cells. Two modes of SLAMF1 signaling seem to exist: one depending on SH2D1A (and perhaps SH2D1B) and another in which protein-tyrosine phosphatase 2C (PTPN11)-dependent signal transduction operates. Initially it has been proposed that association with SH2D1A prevents binding to inhibitory effectors including INPP5D/SHIP1 and PTPN11/SHP-2. However, signaling is also regulated by SH2D1A which can simultaneously interact with and recruit FYN which subsequently phosphorylates and activates SLAMF1. Mediates IL-2-independent proliferation of activated T cells during immune responses and induces IFN-gamma production. Downstreaming signaling involves INPP5D/SHIP1, DOK1 and DOK2 leading to inhibited IFN-gamma production in T-cells, and PRKCQ, BCL10 and NFKB1 leading to increased T-cell activation and Th2 cytokine production. Promotes T-cell receptor-induced IL-4 secretion by CD4(+) cells. Inhibits antigen receptor-mediated production of IFN-gamma, but not IL-2, in CD4(-)/CD8(-) T-cells. Required for IL-4 production by germinal centers T follicular helper (T(Fh))cells. May inhibit CD40-induced signal transduction in monocyte-derived dendritic cells. May play a role in allergic responses and may regulate allergen-induced Th2 cytokine and Th1 cytokine secretion. In conjunction with SLAMF6 controls the transition between positive selection and the subsequent expansion and differentiation of the thymocytic natural killer T (NKT) cell lineage. Involved in the peripheral differentiation of indifferent natural killer T (iNKT) cells toward a regulatory NKT2 type. In macrophages involved in down-regulation of IL-12, TNF-alpha and nitric oxide in response to lipopolysaccharide (LPS). In B-cells activates the ERK signaling pathway independently of SH2D1A but implicating both, SYK and INPP5D, and activates Akt signaling dependent on SYK and SH2D1A. In conjunction with SLAMF5 and SLAMF6 may be a negative regulator of the humoral immune response. This is Signaling lymphocytic activation molecule (SLAMF1) from Canis lupus familiaris (Dog).